We begin with the raw amino-acid sequence, 570 residues long: Protein translocase subunit SecD (570 aa).

A compositionally biased stretch (polar residues) spans 104 to 117; that stretch reads GANATGTPSASETG. The interval 104-198 is disordered; that stretch reads GANATGTPSA…SASASGDDAT (95 aa). Over residues 122 to 146 the composition is skewed to basic and acidic residues; that stretch reads KATDKATDKATDKATDGDKATDGDK. 2 stretches are compositionally biased toward low complexity: residues 147–161 and 172–196; these read ASGT…SATS and ADPS…SGDD. 5 helical membrane-spanning segments follow: residues 370–390, 395–415, 419–439, 474–494, and 498–518; these read AGLI…LFYY, FIAV…MALL, IGFA…GITA, ILVS…VTVG, and GFAF…FLFT. The disordered stretch occupies residues 540–570; it reads LDPKALGAKPPLRRTRRPSRPAAGPVDPKEA.

The protein belongs to the SecD/SecF family. SecD subfamily. Forms a complex with SecF. Part of the essential Sec protein translocation apparatus which comprises SecA, SecYEG and auxiliary proteins SecDF. Other proteins may also be involved.

The protein resides in the cell membrane. Part of the Sec protein translocase complex. Interacts with the SecYEG preprotein conducting channel. SecDF uses the proton motive force (PMF) to complete protein translocation after the ATP-dependent function of SecA. The chain is Protein translocase subunit SecD from Streptomyces coelicolor (strain ATCC BAA-471 / A3(2) / M145).